Reading from the N-terminus, the 357-residue chain is Glutamine synthetase cytosolic isozyme (357 aa).

A GS beta-grasp domain is found at 20–100; it reads VIAEYIWIGG…VICDAYSPNG (81 aa). The region spanning 107 to 357 is the GS catalytic domain; it reads KRAAAAKIFN…IAETTILWKP (251 aa).

Belongs to the glutamine synthetase family. In terms of assembly, homooctamer.

It localises to the cytoplasm. The enzyme catalyses L-glutamate + NH4(+) + ATP = L-glutamine + ADP + phosphate + H(+). The chain is Glutamine synthetase cytosolic isozyme from Pinus sylvestris (Scotch pine).